A 98-amino-acid polypeptide reads, in one-letter code: Large ribosomal subunit protein uL23 (98 aa).

Belongs to the universal ribosomal protein uL23 family. In terms of assembly, part of the 50S ribosomal subunit. Contacts protein L29, and trigger factor when it is bound to the ribosome.

Functionally, one of the early assembly proteins it binds 23S rRNA. One of the proteins that surrounds the polypeptide exit tunnel on the outside of the ribosome. Forms the main docking site for trigger factor binding to the ribosome. The protein is Large ribosomal subunit protein uL23 of Methylobacterium sp. (strain 4-46).